The primary structure comprises 1627 residues: Surface protein G (1627 aa).

An N-terminal signal peptide occupies residues 1–50; sequence MRDKKGPVNKRVDFLSNKLNKYSIRKFTVGTASILIGSLMYLGTQQEAEA. A YSIRK-G/S signaling motif motif is present at residues 22–33; that stretch reads YSIRKFTVGTAS. Residues 51 to 418 form a ligand binding A region, squamous nasal epithelial cell binding region; sequence AENNIENPTT…KGSEFTFTPE (368 aa). 3 disordered regions span residues 74–143, 440–467, and 496–1601; these read EVTN…VRKA, KFNPDLAPGTEKVTREGQKGEKTITTPT, and EYGP…TGLE. Basic and acidic residues-rich tracts occupy residues 96 to 120, 451 to 461, 505 to 523, 554 to 570, 579 to 589, 606 to 619, 633 to 651, 682 to 698, 707 to 717, 736 to 747, 761 to 779, 810 to 826, 835 to 845, 862 to 875, 889 to 907, 938 to 954, 963 to 973, 990 to 1003, 1017 to 1035, 1066 to 1082, 1091 to 1101, 1118 to 1131, 1145 to 1163, 1194 to 1210, 1219 to 1229, 1246 to 1259, 1273 to 1291, 1322 to 1338, 1347 to 1357, 1374 to 1387, 1431 to 1442, and 1459 to 1478; these read DTIEHEPSVKAEDISKKEDTPKEVA, KVTREGQKGEK, GHRDEFDPKLPTGEKEEVP, SIVEKEEIPFEKERKFN, SKGESKEEITKDPI, GEPKEEITKDPI, SIVEKEEIPFKKERKFN, SKGESKEEITKDPV, KVIEEPVDDVIK, and FETKREFNPKLQPGEERVKQ. In terms of domain architecture, G5 1 spans 419–501; that stretch reads APKTITELEK…NELTEYGPET (83 aa). The 83-residue stretch at 547-629 folds into the G5 2 domain; it reads YGPVKGDSIV…NELTEYGPET (83 aa). The region spanning 675–757 is the G5 3 domain; it reads YGPVKGDSIV…NELTEYGPET (83 aa). One can recognise a G5 4 domain in the interval 803 to 885; sequence YGPVKGDSIV…NELTEYGPET (83 aa). The G5 5 domain maps to 931-1013; the sequence is YGPVKGDSIV…NELTEYGPET (83 aa). Residues 1059-1141 enclose the G5 6 domain; sequence YGPVKGDSIV…NELTEYGPET (83 aa). The G5 7 domain occupies 1187 to 1269; the sequence is YGPVKGDSIV…NELTEYGPET (83 aa). The 83-residue stretch at 1315–1397 folds into the G5 8 domain; that stretch reads YGPVKGDSIV…NELTEFGGEK (83 aa). The 83-residue stretch at 1443–1525 folds into the G5 9 domain; sequence HGPKTGTPET…DKIVEFGGEK (83 aa). The segment covering 1481–1495 has biased composition (polar residues); the sequence is QPGSKTITTPITVNP. A compositionally biased stretch (basic and acidic residues) spans 1509–1539; it reads EITKQPVDKIVEFGGEKPKDPKGPENPEKPS. The LPXTG sorting signal motif lies at 1595-1599; that stretch reads LPKTG. Residue T1598 is modified to Pentaglycyl murein peptidoglycan amidated threonine. Residues 1599 to 1627 constitute a propeptide, removed by sortase; it reads GLESTQKGLIFSSIIGIAGLMLLARRRKN.

It is found in the secreted. The protein resides in the cell wall. Its function is as follows. Promotes adhesion of bacterial cells to human squamous nasal epithelial cells, a phenomenon which is likely to be important in nasal colonization. Forms short, extremely dense and thin fibrils all over the bacterial surface. Does not bind to either buccal cells or non-differentiated keratinocytes. Promotes cellular aggregation leading to biofilm formation. This is Surface protein G (sasG) from Staphylococcus aureus (strain NCTC 8325 / PS 47).